A 485-amino-acid polypeptide reads, in one-letter code: Glutamate mutase epsilon subunit (485 aa).

Arg66 serves as a coordination point for L-glutamate. Adenosylcob(III)alamin is bound at residue Gly68. Residue Arg100 participates in L-glutamate binding. An adenosylcob(III)alamin-binding site is contributed by Asn123. Residues 149-150 (RH), Glu171, and Tyr177 contribute to the L-glutamate site. Pro180 contacts adenosylcob(III)alamin. Tyr181 provides a ligand contact to L-glutamate. The adenosylcob(III)alamin site is built by Phe297, Lys326, Glu330, and Ile334.

It belongs to the methylaspartate mutase GlmE subunit family. In terms of assembly, heterotetramer composed of 2 epsilon subunits (GlmE) and 2 sigma subunits (GlmS). GlmE exists as a homodimer and GlmS as a monomer. Adenosylcob(III)alamin is required as a cofactor.

It carries out the reaction (2S,3S)-3-methyl-L-aspartate = L-glutamate. Its pathway is amino-acid degradation; L-glutamate degradation via mesaconate pathway; acetate and pyruvate from L-glutamate: step 1/4. Catalyzes the carbon skeleton rearrangement of L-glutamate to L-threo-3-methylaspartate ((2S,3S)-3-methylaspartate). The protein is Glutamate mutase epsilon subunit of Treponema denticola (strain ATCC 35405 / DSM 14222 / CIP 103919 / JCM 8153 / KCTC 15104).